Consider the following 794-residue polypeptide: Potassium transporter 2 (794 aa).

Residues 1-21 lie on the Cytoplasmic side of the membrane; it reads MDLNLGKCCGSRSSKKESWRS. A helical transmembrane segment spans residues 22–42; it reads VLLLAYQSLGVVYGDLSISPL. Residues 43–64 lie on the Extracellular side of the membrane; sequence YVFKSTFAEDIQHSETNEEIYG. A helical transmembrane segment spans residues 65-85; sequence VMSFVFWTLTLVPLLKYVFIV. Residues 86 to 153 lie on the Cytoplasmic side of the membrane; that stretch reads LRADDNGEGG…EKHKWLHTAL (68 aa). A helical membrane pass occupies residues 154–174; sequence LLLVLLGTCMVIGDGLLTPAI. At 175–193 the chain is on the extracellular side; that stretch reads SVFSAVSGLELNMSKEHHQ. The helical transmembrane segment at 194-214 threads the bilayer; the sequence is YAVIPITCFILVCLFSLQHFG. The Cytoplasmic portion of the chain corresponds to 215–217; it reads THR. A helical transmembrane segment spans residues 218-238; it reads VGFVFAPIVLTWLLCISGIGL. Residues 239-265 are Extracellular-facing; sequence YNIIQWNPHIYKALSPTYMFMFLRKTR. Residues 266–286 traverse the membrane as a helical segment; the sequence is VSGWMSLGGILLCITGAEAMF. At 287–294 the chain is on the cytoplasmic side; the sequence is ADLGHFNY. The helical transmembrane segment at 295-315 threads the bilayer; sequence AAIQIAFTFLVYPALILAYMG. The Extracellular portion of the chain corresponds to 316-339; it reads QAAYLSRHHHSAHAIGFYVSVPKC. A helical transmembrane segment spans residues 340-360; it reads LHWPVLAVAILASVVGSQAII. The Cytoplasmic segment spans residues 361 to 391; it reads SGTFSIINQSQSLGCFPRVKVIHTSDKMHGQ. Residues 392-412 traverse the membrane as a helical segment; the sequence is IYIPEINWMLMILCIAVTIGF. Residues 413–417 lie on the Extracellular side of the membrane; sequence RDVKH. Transmembrane regions (helical) follow at residues 418–438 and 439–459; these read LGNA…CLTS and LVIV…LLFF. The Extracellular segment spans residues 460–476; the sequence is GSIELLYFSASLTKFRE. Residues 477–497 traverse the membrane as a helical segment; that stretch reads GAWLPILLSLIFMIIMFVWHY. Over 498-794 the chain is Cytoplasmic; that stretch reads TTIKKYEFDL…LLEVGMVYVV (297 aa).

This sequence belongs to the HAK/KUP transporter (TC 2.A.72.3) family. In terms of tissue distribution, slightly detected in roots, stems, leaves and flowers of mature plants and in potassium-starved plants.

The protein resides in the cell membrane. Low-affinity potassium transporter. Could mediate the potassium-dependent cell expansion in growing tissues. The protein is Potassium transporter 2 (POT2) of Arabidopsis thaliana (Mouse-ear cress).